The primary structure comprises 192 residues: Probable GTP-binding protein EngB (192 aa).

Positions 22 to 192 (QLPEIVFVGR…LLEQLAIYTG (171 aa)) constitute an EngB-type G domain. Residues 30–37 (GRSNVGKS), 57–61 (GKTQL), 75–78 (DLPG), 142–145 (TKYD), and 172–174 (YSA) each bind GTP. Positions 37 and 59 each coordinate Mg(2+).

It belongs to the TRAFAC class TrmE-Era-EngA-EngB-Septin-like GTPase superfamily. EngB GTPase family. Requires Mg(2+) as cofactor.

Its function is as follows. Necessary for normal cell division and for the maintenance of normal septation. This is Probable GTP-binding protein EngB from Chlorobium phaeobacteroides (strain BS1).